Here is a 454-residue protein sequence, read N- to C-terminus: Protein disulfide-isomerase TMX3 (454 aa).

An N-terminal signal peptide occupies residues methionine 1 to cysteine 24. Residues lysine 25–arginine 128 enclose the Thioredoxin domain. Residues lysine 25–proline 375 lie on the Lumenal side of the membrane. Residues cysteine 53 and cysteine 56 each act as nucleophile in the active site. Cysteine 53 and cysteine 56 form a disulfide bridge. N-linked (GlcNAc...) asparagine glycans are attached at residues asparagine 258 and asparagine 313. The chain crosses the membrane as a helical span at residues leucine 376 to isoleucine 396. The Cytoplasmic segment spans residues tyrosine 397–aspartate 454. Residues valine 412–aspartate 454 form a disordered region. Residues glutamate 444–aspartate 454 are compositionally biased toward basic and acidic residues. Positions lysine 451–aspartate 454 match the Di-lysine motif motif.

Belongs to the protein disulfide isomerase family.

It is found in the endoplasmic reticulum membrane. The catalysed reaction is Catalyzes the rearrangement of -S-S- bonds in proteins.. In terms of biological role, probable disulfide isomerase, which participates in the folding of proteins containing disulfide bonds. May act as a dithiol oxidase. Acts as a regulator of endoplasmic reticulum-mitochondria contact sites via its ability to regulate redox signals. The polypeptide is Protein disulfide-isomerase TMX3 (TMX3) (Pongo abelii (Sumatran orangutan)).